The primary structure comprises 77 residues: Small ribosomal subunit protein bS18 (77 aa).

The protein belongs to the bacterial ribosomal protein bS18 family. Part of the 30S ribosomal subunit. Forms a tight heterodimer with protein bS6.

In terms of biological role, binds as a heterodimer with protein bS6 to the central domain of the 16S rRNA, where it helps stabilize the platform of the 30S subunit. In Bacillus cytotoxicus (strain DSM 22905 / CIP 110041 / 391-98 / NVH 391-98), this protein is Small ribosomal subunit protein bS18.